The sequence spans 294 residues: Tetraspanin-15 (294 aa).

Residues 1-23 (MPRGDSEQVRYCARFSYLWLKFS) are Cytoplasmic-facing. The chain crosses the membrane as a helical span at residues 24–44 (LIIYSTVFWLIGALVLSVGIY). The Extracellular portion of the chain corresponds to 45–62 (AEVERQKYKTLESAFLAP). A helical transmembrane segment spans residues 63 to 83 (AIILILLGVVMFMVSFIGVLA). At 84–93 (SLRDNLYLLQ) the chain is on the cytoplasmic side. Residues 94-114 (AFMYILGICLIMELIGGVVAL) form a helical membrane-spanning segment. The Extracellular portion of the chain corresponds to 115 to 235 (TFRNQTIDFL…WFMDNYTIMA (121 aa)). Asn-118 carries N-linked (GlcNAc...) asparagine glycosylation. Cystine bridges form between Cys-154-Cys-219, Cys-155-Cys-185, Cys-171-Cys-179, and Cys-186-Cys-198. Asn-189 and Asn-230 each carry an N-linked (GlcNAc...) asparagine glycan. The chain crosses the membrane as a helical span at residues 236 to 256 (GILLGILLPQFLGVLLTLLYI). Over 257–294 (TRVEDIIMEHSVTDGLLGPGAKPSVEAAGTGCCLCYPN) the chain is Cytoplasmic.

It belongs to the tetraspanin (TM4SF) family. As to quaternary structure, interacts with ADAM10; the interaction influences ADAM10 substrate specificity, endocytosis and turnover. In terms of processing, palmitoylated.

It is found in the cell membrane. Its subcellular location is the late endosome membrane. Part of TspanC8 subgroup, composed of 6 members that interact with the transmembrane metalloprotease ADAM10. This interaction is required for ADAM10 exit from the endoplasmic reticulum and for enzymatic maturation and trafficking to the cell surface as well as substrate specificity. Different TspanC8/ADAM10 complexes have distinct substrates. Promotes ADAM10-mediated cleavage of CDH2. Negatively regulates ligand-induced Notch activity probably by regulating ADAM10 activity. The sequence is that of Tetraspanin-15 from Homo sapiens (Human).